The following is a 186-amino-acid chain: Ribosome-recycling factor (186 aa).

The protein belongs to the RRF family.

The protein resides in the cytoplasm. Its function is as follows. Responsible for the release of ribosomes from messenger RNA at the termination of protein biosynthesis. May increase the efficiency of translation by recycling ribosomes from one round of translation to another. This is Ribosome-recycling factor from Beijerinckia indica subsp. indica (strain ATCC 9039 / DSM 1715 / NCIMB 8712).